Reading from the N-terminus, the 139-residue chain is Large ribosomal subunit protein uL16 (139 aa).

The span at 1–19 shows a compositional bias: basic residues; sequence MLIPRRVKHRKQHHPKRSG. The segment at 1 to 25 is disordered; the sequence is MLIPRRVKHRKQHHPKRSGMSKGGT.

The protein belongs to the universal ribosomal protein uL16 family. Part of the 50S ribosomal subunit.

Binds 23S rRNA and is also seen to make contacts with the A and possibly P site tRNAs. The chain is Large ribosomal subunit protein uL16 from Streptomyces griseus subsp. griseus (strain JCM 4626 / CBS 651.72 / NBRC 13350 / KCC S-0626 / ISP 5235).